We begin with the raw amino-acid sequence, 620 residues long: 1-deoxy-D-xylulose-5-phosphate synthase (620 aa).

Thiamine diphosphate is bound by residues His80 and Gly121–Ser123. Residue Asp152 participates in Mg(2+) binding. Residues Gly153–Ala154, Asn181, Tyr288, and Glu370 each bind thiamine diphosphate. Asn181 lines the Mg(2+) pocket.

Belongs to the transketolase family. DXPS subfamily. In terms of assembly, homodimer. It depends on Mg(2+) as a cofactor. The cofactor is thiamine diphosphate.

It catalyses the reaction D-glyceraldehyde 3-phosphate + pyruvate + H(+) = 1-deoxy-D-xylulose 5-phosphate + CO2. The protein operates within metabolic intermediate biosynthesis; 1-deoxy-D-xylulose 5-phosphate biosynthesis; 1-deoxy-D-xylulose 5-phosphate from D-glyceraldehyde 3-phosphate and pyruvate: step 1/1. Catalyzes the acyloin condensation reaction between C atoms 2 and 3 of pyruvate and glyceraldehyde 3-phosphate to yield 1-deoxy-D-xylulose-5-phosphate (DXP). This chain is 1-deoxy-D-xylulose-5-phosphate synthase, found in Enterobacter sp. (strain 638).